The primary structure comprises 162 residues: uncharacterized protein (162 aa).

The protein belongs to the M.jannaschii MJ0150/MJ0739/MJ0745/MJ1460/MJ1642 family.

This is an uncharacterized protein from Methanocaldococcus jannaschii (strain ATCC 43067 / DSM 2661 / JAL-1 / JCM 10045 / NBRC 100440) (Methanococcus jannaschii).